Reading from the N-terminus, the 136-residue chain is Riboflavin kinase (136 aa).

15-20 lines the CDP pocket; sequence GLGEGR. Thr-44 and Asn-46 together coordinate Mg(2+). Thr-103 and Glu-111 together coordinate FMN. Residue 116–119 coordinates CDP; that stretch reads YYLR.

The protein belongs to the archaeal riboflavin kinase family. The cofactor is Mg(2+).

It carries out the reaction riboflavin + CTP = CDP + FMN + H(+). The protein operates within cofactor biosynthesis; FMN biosynthesis; FMN from riboflavin (CTP route): step 1/1. Catalyzes the CTP-dependent phosphorylation of riboflavin (vitamin B2) to form flavin mononucleotide (FMN). The chain is Riboflavin kinase from Sulfurisphaera tokodaii (strain DSM 16993 / JCM 10545 / NBRC 100140 / 7) (Sulfolobus tokodaii).